Consider the following 370-residue polypeptide: Chaperone protein DnaJ (370 aa).

The 65-residue stretch at 4–68 (DYYQVLGVSK…QKRAAYDRFG (65 aa)) folds into the J domain. The CR-type zinc-finger motif lies at 133–211 (GIEKNISFSS…CHGMGRYHKQ (79 aa)). Positions 146, 149, 163, 166, 185, 188, 199, and 202 each coordinate Zn(2+). CXXCXGXG motif repeat units follow at residues 146 to 153 (CDTCHGTG), 163 to 170 (CDACGGVG), 185 to 192 (CHKCQGNG), and 199 to 206 (CKKCHGMG).

The protein belongs to the DnaJ family. In terms of assembly, homodimer. Requires Zn(2+) as cofactor.

The protein localises to the cytoplasm. Functionally, participates actively in the response to hyperosmotic and heat shock by preventing the aggregation of stress-denatured proteins and by disaggregating proteins, also in an autonomous, DnaK-independent fashion. Unfolded proteins bind initially to DnaJ; upon interaction with the DnaJ-bound protein, DnaK hydrolyzes its bound ATP, resulting in the formation of a stable complex. GrpE releases ADP from DnaK; ATP binding to DnaK triggers the release of the substrate protein, thus completing the reaction cycle. Several rounds of ATP-dependent interactions between DnaJ, DnaK and GrpE are required for fully efficient folding. Also involved, together with DnaK and GrpE, in the DNA replication of plasmids through activation of initiation proteins. This is Chaperone protein DnaJ from Rickettsia prowazekii (strain Madrid E).